A 325-amino-acid polypeptide reads, in one-letter code: tRNA N6-adenosine threonylcarbamoyltransferase (325 aa).

Fe cation-binding residues include His-111 and His-115. Substrate is bound by residues 134–138 (LVSGG), Asp-167, Gly-180, Asp-184, and Asn-284. Asp-312 contacts Fe cation.

It belongs to the KAE1 / TsaD family. Requires Fe(2+) as cofactor.

The protein localises to the cytoplasm. It carries out the reaction L-threonylcarbamoyladenylate + adenosine(37) in tRNA = N(6)-L-threonylcarbamoyladenosine(37) in tRNA + AMP + H(+). Functionally, required for the formation of a threonylcarbamoyl group on adenosine at position 37 (t(6)A37) in tRNAs that read codons beginning with adenine. Is involved in the transfer of the threonylcarbamoyl moiety of threonylcarbamoyl-AMP (TC-AMP) to the N6 group of A37, together with TsaE and TsaB. TsaD likely plays a direct catalytic role in this reaction. The sequence is that of tRNA N6-adenosine threonylcarbamoyltransferase from Trichodesmium erythraeum (strain IMS101).